Here is a 485-residue protein sequence, read N- to C-terminus: MDPAVLMEAIVEEVNCPICMTFLREPVSISCGHTFCHSCLSGLWKLPGESQNLSYTCPLCRAPVKPRKLRPNWQLASVVDKVRLLGFCMEMGLKTDVCDLHKEQLTMFCKEDDMVTCEACKQSPEHEAHSVVPIKDVAWEYKWKLQQALEHLRKEQEEAWKLEVSEKEQAAIWKTQMERRKQSIRWEFEKYRQLLKEKELPCQQAEEEAAAAQASLEQEKGETASKLELRREAIIRQSQVLWSMIVELEERSQRPVRWMLQGIQEALNRSESWTLQQLEPISLELKTDCRVLGLRETLKTFAVDVRLDPDTAYSRLVVSKDRKSVHYGVTQQNLPDNPERFYRYNIVLGSQCISSGRHYWEVEVGDRSEWGLGVCVENVDRKEVVYLSPRYGFWVIRLRKGTEYRAGTDEYPLLPLTVPPHRVGIFLDYEAHDISFYNVTDGASHIFTFPCYPFPGRLLPYFSPCYSIDTNNTTPLTICTLGGEG.

The RING-type zinc-finger motif lies at 16–61 (CPICMTFLREPVSISCGHTFCHSCLSGLWKLPGESQNLSYTCPLCR). The B box-type zinc finger occupies 93–134 (LKTDVCDLHKEQLTMFCKEDDMVTCEACKQSPEHEAHSVVPI). Zn(2+) contacts are provided by C98, H101, C120, and H126. The stretch at 144-226 (KLQQALEHLR…EQEKGETASK (83 aa)) forms a coiled coil. A B30.2/SPRY domain is found at 285–483 (LKTDCRVLGL…TPLTICTLGG (199 aa)).

This sequence belongs to the TRIM/RBCC family. As to quaternary structure, interacts with AR/androgen receptor (via ligand-binding domain). Interacts with KAT5/TIP60. Auto-ubiquitinated.

It localises to the cytoplasm. The protein localises to the perinuclear region. Its subcellular location is the nucleus. The enzyme catalyses S-ubiquitinyl-[E2 ubiquitin-conjugating enzyme]-L-cysteine + [acceptor protein]-L-lysine = [E2 ubiquitin-conjugating enzyme]-L-cysteine + N(6)-ubiquitinyl-[acceptor protein]-L-lysine.. Its pathway is protein modification; protein ubiquitination. In terms of biological role, functions as a ubiquitin E3 ligase. Acts as a coactivator of androgen receptor (AR) depending on its ubiquitin ligase activity. This chain is E3 ubiquitin-protein ligase TRIM68 (Trim68), found in Mus musculus (Mouse).